The following is a 411-amino-acid chain: Coiled-coil domain-containing protein 159 (411 aa).

Residues 84-113 are disordered; that stretch reads EQAGKSGAWEKEWDSEPQPHEGTPCSSSDV. A compositionally biased stretch (basic and acidic residues) spans 91-102; that stretch reads AWEKEWDSEPQP. Positions 269–305 form a coiled coil; that stretch reads EELELVREEVTFIYQKLQDQEDEISENLLNIQKMQKT. The disordered stretch occupies residues 372–411; it reads RASSLRGQKGHQCKSSQCPSWDSDSDWERPFSKSGSYPPA. Positions 384 to 393 are enriched in polar residues; it reads CKSSQCPSWD.

In terms of assembly, interacts with DYNLT2. Interacts with GGNBP1. Interacts with OSBP2. Expressed in spermatids but undetectable in the spermatozoon (at protein level). Highly expressed in the testis (at protein level).

In terms of biological role, functions during spermatid development; may participate in the centrosome reduction procedure of spermatids and is required for the formation of the connecting piece/sperm head-tail coupling apparatus (HTCA) and the correct and tight attachment of the flagellum to the nuclear envelope. This is Coiled-coil domain-containing protein 159 (Ccdc159) from Mus musculus (Mouse).